The chain runs to 153 residues: Arachidonate 5-lipoxygenase-activating protein (153 aa).

The Lumenal portion of the chain corresponds to 1–8 (MDQETVGN). The chain crosses the membrane as a helical span at residues 9–30 (IVLLAIVTLISVVQNGFFAHKV). Residues 31 to 52 (EHESKTHNGRSFQRTGPLAFER) lie on the Cytoplasmic side of the membrane. A helical transmembrane segment spans residues 53–77 (VYTANQNCVDAYPTFLVMLWSAGLL). Topologically, residues 78–80 (CSQ) are lumenal. A helical transmembrane segment spans residues 81–102 (VPAAFAGLMYLFVRQKYFVGYL). The Cytoplasmic portion of the chain corresponds to 103–107 (GERTQ). An intramembrane segment occupies 108-115 (STPGYIFG). A helical membrane pass occupies residues 116 to 128 (KRIILFLFAMSLA). Over 129–153 (GILNYFLIAFFGSDFENYIKTVTTT) the chain is Lumenal.

Belongs to the MAPEG family. Homotrimer. Interacts with LTC4S and ALOX5.

It is found in the nucleus membrane. It localises to the endoplasmic reticulum membrane. Required for leukotriene biosynthesis by ALOX5 (5-lipoxygenase). Anchors ALOX5 to the membrane. Binds arachidonic acid, and could play an essential role in the transfer of arachidonic acid to ALOX5. Binds to MK-886, a compound that blocks the biosynthesis of leukotrienes. The chain is Arachidonate 5-lipoxygenase-activating protein (ALOX5AP) from Ovis aries (Sheep).